A 258-amino-acid chain; its full sequence is UPF0246 protein YaaA (258 aa).

It belongs to the UPF0246 family.

In Escherichia coli O8 (strain IAI1), this protein is UPF0246 protein YaaA.